A 374-amino-acid chain; its full sequence is Chaperone protein DnaJ (374 aa).

The J domain maps to 6 to 70; sequence DYYDILGVSK…QKRAQYDQFG (65 aa). The CR-type zinc finger occupies 135–217; sequence GKKTTIKYSR…CGGTGHTSQQ (83 aa). 8 residues coordinate Zn(2+): Cys148, Cys151, Cys165, Cys168, Cys191, Cys194, Cys205, and Cys208. CXXCXGXG motif repeat units follow at residues 148–155, 165–172, 191–198, and 205–212; these read CKTCGGSG, CHKCNGTG, CDVCNGTG, and CPTCGGTG. Disordered stretches follow at residues 308 to 328 and 347 to 374; these read GTNFRLKGKGAPRLRGNGTGD and EALKQFAKASGEEPSGHGKSGFFDKFMN.

It belongs to the DnaJ family. In terms of assembly, homodimer. Zn(2+) is required as a cofactor.

It is found in the cytoplasm. Its function is as follows. Participates actively in the response to hyperosmotic and heat shock by preventing the aggregation of stress-denatured proteins and by disaggregating proteins, also in an autonomous, DnaK-independent fashion. Unfolded proteins bind initially to DnaJ; upon interaction with the DnaJ-bound protein, DnaK hydrolyzes its bound ATP, resulting in the formation of a stable complex. GrpE releases ADP from DnaK; ATP binding to DnaK triggers the release of the substrate protein, thus completing the reaction cycle. Several rounds of ATP-dependent interactions between DnaJ, DnaK and GrpE are required for fully efficient folding. Also involved, together with DnaK and GrpE, in the DNA replication of plasmids through activation of initiation proteins. The protein is Chaperone protein DnaJ of Pediococcus pentosaceus (strain ATCC 25745 / CCUG 21536 / LMG 10740 / 183-1w).